A 305-amino-acid polypeptide reads, in one-letter code: Short-chain dehydrogenase/reductase VdtF (305 aa).

NADP(+) contacts are provided by Leu-28 and Asn-98. Catalysis depends on Ser-192, which acts as the Proton donor. Residues Tyr-206, Lys-210, and Thr-241 each coordinate NADP(+). Residue Tyr-206 is the Proton acceptor of the active site. The active-site Lowers pKa of active site Tyr is the Lys-210.

Belongs to the short-chain dehydrogenases/reductases (SDR) family.

It catalyses the reaction methyl 2-[(3S)-9,10-dihydroxy-7-methoxy-1-oxo-1H,3H,4H-naphtho[2,3-c]pyran-3-yl]acetate + AH2 = semiviriditoxin + A. The catalysed reaction is 9,10-dihydroxy-7-methoxy-3-(2-oxopropyl)-1H-benzo[g]isochromen-1-one + AH2 = (3S)-9,10-dihydroxy-7-methoxy-3-(2-oxopropyl)-1H,3H,4H-naphtho[2,3-c]pyran-1-one + A. It functions in the pathway secondary metabolite biosynthesis. Functionally, short-chain dehydrogenase/reductase; part of the gene cluster that mediates the biosynthesis of viriditoxin, one of the 'classical' secondary metabolites produced by fungi and that has antibacterial activity. The first step is performed by the polyketide synthase VdtA which condenses one acetyl-CoA and 6 malonyl-CoA units to form the heptaketide monomer backbone of viriditoxin. The product of VdtA is then O-methylated on C7 by the O-methyltransferase VdtC. The O-methyl group is important for the stereoselective coupling of the monomers at the final step of viriditoxin biosynthesis. The short-chain dehydrogenase/reductase VdtF then acts as a stereospecific reductase converting the pyrone to dihydropyrone via the reduction of the C3-C4 double bond. The FAD-binding monooxygenase VdtE then converts the ketone group into a methyl-ester group to yield semi-viriditoxin. Finally, the laccase VdtB is involved in dimerization of 2 semi-viriditoxin molecules to yield the final viriditoxin. VdtB is responsible for the regioselective 6,6'-coupling of semi-viriditoxin, which yields (M)-viriditoxin and (P)-viriditoxin at a ratio of 1:2. The non-catalytic carboxylesterase-like protein VdtD affects the stereochemistical outcome of the coupling. The highly reducing polyketide synthase VdtX is not involved in viriditoxin synthesis, but might possibly play a role in the production of additional metabolites not identified yet. This Byssochlamys spectabilis (Paecilomyces variotii) protein is Short-chain dehydrogenase/reductase VdtF.